A 249-amino-acid chain; its full sequence is Ubiquinone/menaquinone biosynthesis C-methyltransferase UbiE (249 aa).

Residues T72, D93, and 121–122 each bind S-adenosyl-L-methionine; that span reads DA.

Belongs to the class I-like SAM-binding methyltransferase superfamily. MenG/UbiE family.

It carries out the reaction a 2-demethylmenaquinol + S-adenosyl-L-methionine = a menaquinol + S-adenosyl-L-homocysteine + H(+). The enzyme catalyses a 2-methoxy-6-(all-trans-polyprenyl)benzene-1,4-diol + S-adenosyl-L-methionine = a 5-methoxy-2-methyl-3-(all-trans-polyprenyl)benzene-1,4-diol + S-adenosyl-L-homocysteine + H(+). It participates in quinol/quinone metabolism; menaquinone biosynthesis; menaquinol from 1,4-dihydroxy-2-naphthoate: step 2/2. Its pathway is cofactor biosynthesis; ubiquinone biosynthesis. In terms of biological role, methyltransferase required for the conversion of demethylmenaquinol (DMKH2) to menaquinol (MKH2) and the conversion of 2-polyprenyl-6-methoxy-1,4-benzoquinol (DDMQH2) to 2-polyprenyl-3-methyl-6-methoxy-1,4-benzoquinol (DMQH2). The protein is Ubiquinone/menaquinone biosynthesis C-methyltransferase UbiE of Saccharophagus degradans (strain 2-40 / ATCC 43961 / DSM 17024).